Consider the following 221-residue polypeptide: MALPNQQTVDYPSFKLVIVGDGGTGKTTFVKRHLTGEFEKKYEPTIGVEVHPLDFFTNCGKIRFYCWDTAGQEKFGGLRDGYYIHGQCAIIMFDVTARLTYKNVPTWHRDLCRVCENIPIVLCGNKVDVKNRQVKAKQVTFHRKKNLQYYEISAKSNYNFEKPFLYLARKLAGDANLHFVESPALAPPEVQIDLAAQQLHEQELLQAAAHALPDDDDEAFE.

Positions 10–174 (DYPSFKLVIV…LYLARKLAGD (165 aa)) constitute a Small GTPase Ran-type domain. 21–28 (DGGTGKTT) lines the GTP pocket. The tract at residues 40–48 (KKYEPTIGV) is switch-I. Residues Gly71, 125–128 (NKVD), and 153–155 (SAK) contribute to the GTP site. The interval 71–87 (GQEKFGGLRDGYYIHGQ) is switch-II.

Belongs to the small GTPase superfamily. Ran family. In terms of assembly, found in a nuclear export complex with RanGTP, exportin and pre-miRNA.

Its subcellular location is the nucleus. In terms of biological role, GTP-binding protein involved in nucleocytoplasmic transport. Required for the import of protein into the nucleus and also for RNA export. Involved in chromatin condensation and control of cell cycle. This is GTP-binding nuclear protein Ran-B1 (RAN-B1) from Nicotiana tabacum (Common tobacco).